We begin with the raw amino-acid sequence, 359 residues long: Phospho-N-acetylmuramoyl-pentapeptide-transferase (359 aa).

Helical transmembrane passes span 27 to 47, 73 to 93, 94 to 114, 134 to 154, 166 to 186, 197 to 217, 233 to 253, 261 to 281, 286 to 306, and 336 to 356; these read IYALLTALVITIVLGPMMMRW, TMGGLLLGFGVLVSTLLWADL, TNIYVWLTMLVFAGFGLVGFV, LLGQLLVAGTAVGLLIMQPAY, FTPDLGWMYLPFALLVMIGAS, GLAIGPSITSATCYAFFIYIA, GVGEVTVFCGALVGAGLGFLW, LFMGDVGSLSIGGVLGFIAVL, LLLIIVGGVFVFETISVIMQV, and KIVIRFWVISILMALMALSTL.

Belongs to the glycosyltransferase 4 family. MraY subfamily. Mg(2+) is required as a cofactor.

The protein localises to the cell inner membrane. It carries out the reaction UDP-N-acetyl-alpha-D-muramoyl-L-alanyl-gamma-D-glutamyl-meso-2,6-diaminopimeloyl-D-alanyl-D-alanine + di-trans,octa-cis-undecaprenyl phosphate = di-trans,octa-cis-undecaprenyl diphospho-N-acetyl-alpha-D-muramoyl-L-alanyl-D-glutamyl-meso-2,6-diaminopimeloyl-D-alanyl-D-alanine + UMP. It functions in the pathway cell wall biogenesis; peptidoglycan biosynthesis. Functionally, catalyzes the initial step of the lipid cycle reactions in the biosynthesis of the cell wall peptidoglycan: transfers peptidoglycan precursor phospho-MurNAc-pentapeptide from UDP-MurNAc-pentapeptide onto the lipid carrier undecaprenyl phosphate, yielding undecaprenyl-pyrophosphoryl-MurNAc-pentapeptide, known as lipid I. This is Phospho-N-acetylmuramoyl-pentapeptide-transferase from Maridesulfovibrio salexigens (strain ATCC 14822 / DSM 2638 / NCIMB 8403 / VKM B-1763) (Desulfovibrio salexigens).